The sequence spans 184 residues: Photosystem I assembly protein Ycf4 (184 aa).

2 helical membrane passes run 22 to 42 (LCWAFILVLGAIGFSLVGFSS) and 64 to 84 (IVMCFYGIAGIFLGFYLWCTI).

This sequence belongs to the Ycf4 family.

Its subcellular location is the plastid. The protein localises to the chloroplast thylakoid membrane. Its function is as follows. Seems to be required for the assembly of the photosystem I complex. The sequence is that of Photosystem I assembly protein Ycf4 from Angiopteris evecta (Mule's foot fern).